The chain runs to 511 residues: Light-independent protochlorophyllide reductase subunit B (511 aa).

A [4Fe-4S] cluster-binding site is contributed by aspartate 36. Aspartate 299 (proton donor) is an active-site residue. Residue 434–435 (GM) participates in substrate binding.

The protein belongs to the ChlB/BchB/BchZ family. In terms of assembly, protochlorophyllide reductase is composed of three subunits; ChlL, ChlN and ChlB. Forms a heterotetramer of two ChlB and two ChlN subunits. Requires [4Fe-4S] cluster as cofactor.

The protein localises to the plastid. The protein resides in the chloroplast. It catalyses the reaction chlorophyllide a + oxidized 2[4Fe-4S]-[ferredoxin] + 2 ADP + 2 phosphate = protochlorophyllide a + reduced 2[4Fe-4S]-[ferredoxin] + 2 ATP + 2 H2O. It functions in the pathway porphyrin-containing compound metabolism; chlorophyll biosynthesis (light-independent). Functionally, component of the dark-operative protochlorophyllide reductase (DPOR) that uses Mg-ATP and reduced ferredoxin to reduce ring D of protochlorophyllide (Pchlide) to form chlorophyllide a (Chlide). This reaction is light-independent. The NB-protein (ChlN-ChlB) is the catalytic component of the complex. In Huperzia lucidula (Shining clubmoss), this protein is Light-independent protochlorophyllide reductase subunit B.